The chain runs to 53 residues: Membrane antigen containing repeating peptides (53 aa).

6 tandem repeats follow at residues 1–10, 11–20, 21–30, 31–40, 41–50, and 51–53. Residues 1–53 form a 6 X 10 AA tandem repeats region; that stretch reads EAEEAARLQAEAEEAARQQAEAEEAARLQAEAEEAARLQAEAEEAARLQAEAE. Residues 1-53 are disordered; it reads EAEEAARLQAEAEEAARQQAEAEEAARLQAEAEEAARLQAEAEEAARLQAEAE.

It is found in the membrane. This Leishmania major protein is Membrane antigen containing repeating peptides.